Here is a 273-residue protein sequence, read N- to C-terminus: NADPH-dependent 7-cyano-7-deazaguanine reductase (273 aa).

80-82 provides a ligand contact to substrate; that stretch reads VES. 82–83 contacts NADPH; that stretch reads SK. Cys180 serves as the catalytic Thioimide intermediate. Asp187 acts as the Proton donor in catalysis. Residue 219 to 220 participates in substrate binding; it reads HE. Residue 248 to 249 coordinates NADPH; the sequence is RG.

This sequence belongs to the GTP cyclohydrolase I family. QueF type 2 subfamily. Homodimer.

It is found in the cytoplasm. It catalyses the reaction 7-aminomethyl-7-carbaguanine + 2 NADP(+) = 7-cyano-7-deazaguanine + 2 NADPH + 3 H(+). Its pathway is tRNA modification; tRNA-queuosine biosynthesis. Catalyzes the NADPH-dependent reduction of 7-cyano-7-deazaguanine (preQ0) to 7-aminomethyl-7-deazaguanine (preQ1). The polypeptide is NADPH-dependent 7-cyano-7-deazaguanine reductase (Bordetella pertussis (strain Tohama I / ATCC BAA-589 / NCTC 13251)).